Reading from the N-terminus, the 121-residue chain is Small ribosomal subunit protein uS13 (121 aa).

The disordered stretch occupies residues 91 to 121 (HRRGLPVRGQNSKNNARTRKGPRRTVANKKK). A compositionally biased stretch (basic residues) spans 106 to 121 (ARTRKGPRRTVANKKK).

This sequence belongs to the universal ribosomal protein uS13 family. As to quaternary structure, part of the 30S ribosomal subunit. Forms a loose heterodimer with protein S19. Forms two bridges to the 50S subunit in the 70S ribosome.

In terms of biological role, located at the top of the head of the 30S subunit, it contacts several helices of the 16S rRNA. In the 70S ribosome it contacts the 23S rRNA (bridge B1a) and protein L5 of the 50S subunit (bridge B1b), connecting the 2 subunits; these bridges are implicated in subunit movement. Contacts the tRNAs in the A and P-sites. This Bacillus cereus (strain AH187) protein is Small ribosomal subunit protein uS13.